A 397-amino-acid polypeptide reads, in one-letter code: ATP-dependent RNA helicase eIF4A (397 aa).

Residues 23–51 (YKFDDLNLKPNIVRGIFGYGYETPSAIQQ) carry the Q motif motif. The Helicase ATP-binding domain occupies 54-224 (ILPITEGRDV…TKFMNNPVRI (171 aa)). 67 to 74 (AQSGTGKT) provides a ligand contact to ATP. A DEAD box motif is present at residues 172 to 175 (DEAD). One can recognise a Helicase C-terminal domain in the interval 235–396 (GIKQFYINVE…EMPADIGALF (162 aa)).

Belongs to the DEAD box helicase family. eIF4A subfamily. As to quaternary structure, component of the eIF4F complex, which composition varies with external and internal environmental conditions. It is composed of at least eIF4A, eIF4E and eIF4G.

It localises to the cytoplasm. It catalyses the reaction ATP + H2O = ADP + phosphate + H(+). Its function is as follows. ATP-dependent RNA helicase which is a subunit of the eIF4F complex involved in cap recognition and is required for mRNA binding to ribosome. In the current model of translation initiation, eIF4A unwinds RNA secondary structures in the 5'-UTR of mRNAs which is necessary to allow efficient binding of the small ribosomal subunit, and subsequent scanning for the initiator codon. This is ATP-dependent RNA helicase eIF4A (TIF1) from Candida albicans (strain SC5314 / ATCC MYA-2876) (Yeast).